A 173-amino-acid chain; its full sequence is HTH-type transcriptional regulator IscR (173 aa).

An HTH rrf2-type domain is found at 2–131 (RLTSKGRYAV…NNITLGELMM (130 aa)). The segment at residues 28-51 (LADISERQGISLSYLEQLFSKLRK) is a DNA-binding region (H-T-H motif). [2Fe-2S] cluster-binding residues include Cys-92, Cys-98, and Cys-104.

It depends on [2Fe-2S] cluster as a cofactor.

Its function is as follows. Regulates the transcription of several operons and genes involved in the biogenesis of Fe-S clusters and Fe-S-containing proteins. This is HTH-type transcriptional regulator IscR from Vibrio cholerae serotype O1 (strain ATCC 39315 / El Tor Inaba N16961).